Consider the following 570-residue polypeptide: Trans-cinnamate:CoA ligase, peroxisomal (570 aa).

Positions 568–570 (ARL) match the Microbody targeting signal motif.

Belongs to the ATP-dependent AMP-binding enzyme family. As to quaternary structure, monomer. K(+) is required as a cofactor. As to expression, mostly expressed in flower organs, with highest levels in corollas and petal limbs, and, to a lesser extent, in petal tubes, sepals, pistils, stamen, stigma, anthers and ovaries. Also present at low levels in leaves, stems and roots.

The protein localises to the peroxisome. It catalyses the reaction (E)-4-coumarate + ATP + CoA = (E)-4-coumaroyl-CoA + AMP + diphosphate. It carries out the reaction (E)-caffeate + ATP + CoA = (E)-caffeoyl-CoA + AMP + diphosphate. The catalysed reaction is (E)-cinnamate + ATP + CoA = (E)-cinnamoyl-CoA + AMP + diphosphate. Its pathway is phenylpropanoid metabolism; trans-cinnamate biosynthesis. The protein operates within phytoalexin biosynthesis; 3,4',5-trihydroxystilbene biosynthesis; 3,4',5-trihydroxystilbene from trans-4-coumarate: step 1/2. Involved in the biosynthesis of floral volatile benzenoid/phenylpropanoid (FVBP) scent (e.g. benzylbenzoate, phenylethylbenzoate, and methylbenzoate). Catalyzes the formation of CoA esters of cinnamic acid, and, with lower efficiency, of 4-coumaric acid and caffeic acid. In Petunia hybrida (Petunia), this protein is Trans-cinnamate:CoA ligase, peroxisomal.